We begin with the raw amino-acid sequence, 627 residues long: Pheromone B alpha 2 receptor (627 aa).

Over 1 to 7 (MLDPTYP) the chain is Extracellular. A helical membrane pass occupies residues 8–28 (AFPIFAFLGIVCCLVPLPWHL). Topologically, residues 29 to 35 (QSWNSGT) are cytoplasmic. A helical membrane pass occupies residues 36-56 (CFLMIWTAVACLNMFVNSIIW). Residues 57 to 69 (KDHAQNVAPVWCE) lie on the Extracellular side of the membrane. The chain crosses the membrane as a helical span at residues 70–90 (ISIRITLGASVGIPASSLCIV). Topologically, residues 91-102 (RRLYSIAKKFRA) are cytoplasmic. Residues 103 to 123 (VMVDALICVLFPILYIILQIV) form a helical membrane-spanning segment. At 124 to 150 (VQGHRFNILENIGCFPAIINTPLTYPL) the chain is on the extracellular side. A helical transmembrane segment spans residues 151 to 171 (TFMWPVLIGVISFIYSTLALI). The Cytoplasmic segment spans residues 172-197 (QFNRHRLQFTQFLHSNSTLSVSRYLR). The chain crosses the membrane as a helical span at residues 198–218 (LMALAMTEMMCTTPMGVFVII). The Extracellular portion of the chain corresponds to 219–260 (LNAKATPVSPYVSWAVTHYGYGRIDQVPAIIWRSNRLLVASY). A helical transmembrane segment spans residues 261 to 281 (ELTRWSSPAIALIFFFYFGFA). Residues 282 to 627 (QEARRNYAAA…ASPRTHRASV (346 aa)) are Cytoplasmic-facing. 3 disordered regions span residues 363–405 (LPRP…SSPI), 479–505 (TVPQ…SSSA), and 518–627 (LPST…RASV). Positions 372-387 (SSSGFSSSDSTRFGSS) are enriched in low complexity. Composition is skewed to polar residues over residues 519–533 (PSTT…SLPT) and 545–555 (SLSQLFGISSM). The segment covering 569-607 (ATGTASPTTTAPAPASTTIAPASATMAPATTTTAPTTIA) has biased composition (low complexity).

The protein belongs to the G-protein coupled receptor 4 family.

The protein resides in the cell membrane. Receptor for the BAP2 pheromone, a prenylated mating factor. The receptor/pheromone interaction may have a role in the fusion of clamp cells. The polypeptide is Pheromone B alpha 2 receptor (BAR2) (Schizophyllum commune (Split gill fungus)).